The sequence spans 217 residues: 3-demethoxyubiquinol 3-hydroxylase (217 aa).

6 residues coordinate Fe cation: glutamate 66, glutamate 96, histidine 99, glutamate 148, glutamate 180, and histidine 183.

Belongs to the COQ7 family. The cofactor is Fe cation.

It localises to the cell membrane. It catalyses the reaction a 5-methoxy-2-methyl-3-(all-trans-polyprenyl)benzene-1,4-diol + AH2 + O2 = a 3-demethylubiquinol + A + H2O. Its pathway is cofactor biosynthesis; ubiquinone biosynthesis. Catalyzes the hydroxylation of 2-nonaprenyl-3-methyl-6-methoxy-1,4-benzoquinol during ubiquinone biosynthesis. The polypeptide is 3-demethoxyubiquinol 3-hydroxylase (Xanthomonas campestris pv. campestris (strain 8004)).